The primary structure comprises 821 residues: MSVSTSVVKSMLQLTNYFGSNFTPKTETISSLAELWERHGSMIASMMSCDTREFGTADKFYEVIFRKIATTSLSFMTDSLEPKLAASGDSLEICKFYALFLEYMRKDHSGMLTRALEQASSENRVDTAVLLDMFLFFDNVYSESTADDWWACLRRDDEDQEASSGFRTPKRNNYSLTSLQTPTATARRLRTASSTARRSPIAEAVDSPTMKFMRSERELKQSKARIFGLEQMLGDLEDDKTKLSAENRTLKLSNSDLKSDIAKLKGIAEEAQFRAEELSCDLEAKKDEVHNILQQLNESRMTLRSEQRSLEEADIKKENLTAKLKTVTEDNGKLMKQARELRDLNDYEFARFRQQEQELTETLRATQDQMADLQEQLTGVEKIRASLKSENESLSASVEELSVASLRNKQDADNSKTMLSEELARFEETVDKLRQEKLEALSMANSRIDALRLEHSEREKMMKSTNARLQADLDEERNEKKRLMNLWNELNEKSLNVDKAVHKSNEEFQSMGSCLQNAKRQIEQLEVACKSKDDIIKFQEEQNKRAANLIKNEKAIRDQASAQFAEKLAILKNSLAEKENETVTLKENFASVVMKHKAELEEKELFLQSRVDLIQRLEHEVADLREKESAEIKKSTWMGERIKIFQQAPMRGSRIRCGSPDSLPDFLADNGPTITEEELRAQLATFPRKSIAPSVDDNEFDKGTPIGFKSNMYDGRESICSLDFFDRSSLQRSSMRSESIQLASPSSAGEFKQPFTPSGVTKERVGVLTARNEKVKPHLKCSYASEVGSTNSPSADEENIKKSKKKNRRDSIFSAFSSKKQ.

The interval 161-199 (EASSGFRTPKRNNYSLTSLQTPTATARRLRTASSTARRS) is disordered. The span at 162–180 (ASSGFRTPKRNNYSLTSLQ) shows a compositional bias: polar residues. Positions 181–199 (TPTATARRLRTASSTARRS) are enriched in low complexity. Positions 211–634 (KFMRSERELK…REKESAEIKK (424 aa)) form a coiled coil. Disordered stretches follow at residues 736 to 758 (RSES…FTPS) and 779 to 821 (LKCS…SKKQ).

In terms of assembly, interacts with gpr-1; gpr-1 forms a complex with gpr-2 and GDP-bound goa-1.

The protein localises to the cytoplasm. Its subcellular location is the cell cortex. It localises to the cytoskeleton. It is found in the spindle. The protein resides in the chromosome. The protein localises to the centromere. Its subcellular location is the kinetochore. It localises to the microtubule organizing center. It is found in the centrosome. Its function is as follows. Essential component of the spindle apparatus required for spindle positioning and chromosome movement. Acts to recruit or anchor gpr-1/gpr-2 complex to the spindle and cortex. Also involved, directly or indirectly, in cytokinesis and in the coupling of DNA replication, centrosome duplication and mitotic division. The chain is Spindle apparatus protein lin-5 (lin-5) from Caenorhabditis elegans.